Reading from the N-terminus, the 94-residue chain is uncharacterized protein (94 aa).

This is an uncharacterized protein from Rickettsia prowazekii (strain Madrid E).